The primary structure comprises 539 residues: Phosphoenolpyruvate carboxykinase (ATP) (539 aa).

Residues Arg59, Tyr200, and Lys206 each coordinate substrate. ATP is bound by residues Lys206, His225, and 242-250 (GLSGTGKTT). The Mn(2+) site is built by Lys206 and His225. A Mn(2+)-binding site is contributed by Asp263. Residues Glu291, Arg327, 447–448 (RI), and Thr453 contribute to the ATP site. Arg327 is a substrate binding site.

This sequence belongs to the phosphoenolpyruvate carboxykinase (ATP) family. The cofactor is Mn(2+).

It is found in the cytoplasm. The catalysed reaction is oxaloacetate + ATP = phosphoenolpyruvate + ADP + CO2. It participates in carbohydrate biosynthesis; gluconeogenesis. Involved in the gluconeogenesis. Catalyzes the conversion of oxaloacetate (OAA) to phosphoenolpyruvate (PEP) through direct phosphoryl transfer between the nucleoside triphosphate and OAA. The protein is Phosphoenolpyruvate carboxykinase (ATP) of Selenomonas ruminantium.